The chain runs to 362 residues: NAD(P)H-quinone oxidoreductase subunit 1, chloroplastic (362 aa).

A run of 8 helical transmembrane segments spans residues 29 to 49 (ILPI…IVWL), 103 to 123 (IAVI…HFVL), 128 to 148 (IGVF…LMAG), 164 to 184 (AAQS…ISLL), 202 to 222 (FFGW…ISSL), 247 to 267 (YSGI…LVSS), 303 to 323 (TMGI…SITI), and 335 to 355 (LLNL…LLTT).

Belongs to the complex I subunit 1 family. As to quaternary structure, NDH is composed of at least 16 different subunits, 5 of which are encoded in the nucleus.

Its subcellular location is the plastid. It localises to the chloroplast thylakoid membrane. It carries out the reaction a plastoquinone + NADH + (n+1) H(+)(in) = a plastoquinol + NAD(+) + n H(+)(out). It catalyses the reaction a plastoquinone + NADPH + (n+1) H(+)(in) = a plastoquinol + NADP(+) + n H(+)(out). In terms of biological role, NDH shuttles electrons from NAD(P)H:plastoquinone, via FMN and iron-sulfur (Fe-S) centers, to quinones in the photosynthetic chain and possibly in a chloroplast respiratory chain. The immediate electron acceptor for the enzyme in this species is believed to be plastoquinone. Couples the redox reaction to proton translocation, and thus conserves the redox energy in a proton gradient. This Triticum aestivum (Wheat) protein is NAD(P)H-quinone oxidoreductase subunit 1, chloroplastic.